Reading from the N-terminus, the 386-residue chain is Glyceraldehyde-3-phosphate dehydrogenase, chloroplastic (386 aa).

The transit peptide at 1 to 45 directs the protein to the chloroplast; that stretch reads MAYFKAVAYLAALASAAAFNPGSSFVPRLNAPATQPKAAKMTGPT. NADP(+) contacts are provided by residues 58–59 and Arg125; that span reads RI. D-glyceraldehyde 3-phosphate is bound by residues 197 to 199, Thr228, 257 to 258, and Arg280; these read SCT and TG. The active-site Nucleophile is the Cys198. Asn362 is a binding site for NADP(+).

It belongs to the glyceraldehyde-3-phosphate dehydrogenase family. In terms of assembly, homotetramer.

The protein resides in the plastid. It localises to the chloroplast. It catalyses the reaction D-glyceraldehyde 3-phosphate + phosphate + NADP(+) = (2R)-3-phospho-glyceroyl phosphate + NADPH + H(+). The enzyme catalyses D-glyceraldehyde 3-phosphate + phosphate + NAD(+) = (2R)-3-phospho-glyceroyl phosphate + NADH + H(+). Its pathway is carbohydrate biosynthesis; Calvin cycle. This chain is Glyceraldehyde-3-phosphate dehydrogenase, chloroplastic (GAPC1), found in Guillardia theta (Cryptophyte).